Reading from the N-terminus, the 331-residue chain is Zinc finger CW-type PWWP domain protein 2 homolog (331 aa).

The CW-type zinc-finger motif lies at 9-64 (EFVHRTWVQCENESCLKWRLLSPAAAAAVNPSEPWYCFMNTDPSYSSCSVSEEDFP). The Zn(2+) site is built by C18, C23, C45, and C56. A PWWP domain is found at 83–147 (LGSLVLVKLR…AAFVGHFSLT (65 aa)). Residues 264–295 (IQEPTAREDESQGEQLSQCSPESPTGSPFQSY) are disordered. Positions 276 to 293 (GEQLSQCSPESPTGSPFQ) are enriched in polar residues.

Histone methylation reader which binds to non-methylated (H3K4me0), monomethylated (H3K4me1), dimethylated (H3K4me2) and trimethylated (H3K4me3) 'Lys-4' on histone H3. The order of binding preference is H3K4me3 &gt; H3K4me2 &gt; H3K4me1 &gt; H3K4me0. This is Zinc finger CW-type PWWP domain protein 2 homolog (Zcwpw2) from Mus musculus (Mouse).